The chain runs to 911 residues: Nitrate reductase [NADH], clone PBNBR1412 (911 aa).

Residues 53–72 form a disordered region; it reads NDAVDDSYDSSDDEDESHNR. Residues 56–68 show a composition bias toward acidic residues; the sequence is VDDSYDSSDDEDE. Residue C191 coordinates Mo-molybdopterin. The 76-residue stretch at 539-614 folds into the Cytochrome b5 heme-binding domain; sequence AKMYSMSEVR…LEDYRIGELI (76 aa). Heme-binding residues include H574 and H597. Residues 654–766 enclose the FAD-binding FR-type domain; the sequence is REKVPVTLIE…KGPLGHIEYL (113 aa). FAD is bound by residues 706 to 709, 723 to 727, F728, F735, 740 to 742, and T793; these read RAYT, VVKVY, and LMS.

Belongs to the nitrate reductase family. As to quaternary structure, homodimer. FAD is required as a cofactor. Heme serves as cofactor. It depends on Mo-molybdopterin as a cofactor.

The enzyme catalyses nitrite + NAD(+) + H2O = nitrate + NADH + H(+). In terms of biological role, nitrate reductase is a key enzyme involved in the first step of nitrate assimilation in plants, fungi and bacteria. This Brassica napus (Rape) protein is Nitrate reductase [NADH], clone PBNBR1412 (NIA2).